The chain runs to 253 residues: Adenosylcobinamide-GDP ribazoletransferase (253 aa).

Helical transmembrane passes span 33–53 (ISPL…YVLL), 106–126 (IGSG…VALL), 132–152 (FYTI…GLYI), and 178–198 (VLLL…FLVF).

It belongs to the CobS family. It depends on Mg(2+) as a cofactor.

It is found in the cell membrane. It carries out the reaction alpha-ribazole + adenosylcob(III)inamide-GDP = adenosylcob(III)alamin + GMP + H(+). The enzyme catalyses alpha-ribazole 5'-phosphate + adenosylcob(III)inamide-GDP = adenosylcob(III)alamin 5'-phosphate + GMP + H(+). It participates in cofactor biosynthesis; adenosylcobalamin biosynthesis; adenosylcobalamin from cob(II)yrinate a,c-diamide: step 7/7. Its function is as follows. Joins adenosylcobinamide-GDP and alpha-ribazole to generate adenosylcobalamin (Ado-cobalamin). Also synthesizes adenosylcobalamin 5'-phosphate from adenosylcobinamide-GDP and alpha-ribazole 5'-phosphate. This chain is Adenosylcobinamide-GDP ribazoletransferase, found in Saccharolobus islandicus (strain Y.G.57.14 / Yellowstone #1) (Sulfolobus islandicus).